The sequence spans 210 residues: Hydrogenase expression/formation protein HupD (210 aa).

Residues E22, D68, and H99 each contribute to the Ni(2+) site.

Belongs to the peptidase A31 family.

Functionally, not known. Could be involved in the processing of hydrogenase. In Rhodobacter capsulatus (Rhodopseudomonas capsulata), this protein is Hydrogenase expression/formation protein HupD (hupD).